A 535-amino-acid polypeptide reads, in one-letter code: CTP synthase (535 aa).

The amidoligase domain stretch occupies residues Met1–Leu267. Ser13 is a CTP binding site. Ser13 serves as a coordination point for UTP. Residue Ser14–Ile19 participates in ATP binding. L-glutamine is bound at residue Tyr54. Asp71 is an ATP binding site. 2 residues coordinate Mg(2+): Asp71 and Glu141. Residues Asp148–Glu150, Lys188–Gln193, and Lys224 contribute to the CTP site. UTP-binding positions include Lys188–Gln193 and Lys224. The region spanning Thr292–Leu534 is the Glutamine amidotransferase type-1 domain. Residue Gly354 participates in L-glutamine binding. Cys381 (nucleophile; for glutamine hydrolysis) is an active-site residue. L-glutamine contacts are provided by residues Leu382 to Gln385, Glu405, and Arg462. Catalysis depends on residues His507 and Glu509.

The protein belongs to the CTP synthase family. Homotetramer.

It carries out the reaction UTP + L-glutamine + ATP + H2O = CTP + L-glutamate + ADP + phosphate + 2 H(+). It catalyses the reaction L-glutamine + H2O = L-glutamate + NH4(+). The enzyme catalyses UTP + NH4(+) + ATP = CTP + ADP + phosphate + 2 H(+). It functions in the pathway pyrimidine metabolism; CTP biosynthesis via de novo pathway; CTP from UDP: step 2/2. With respect to regulation, allosterically activated by GTP, when glutamine is the substrate; GTP has no effect on the reaction when ammonia is the substrate. The allosteric effector GTP functions by stabilizing the protein conformation that binds the tetrahedral intermediate(s) formed during glutamine hydrolysis. Inhibited by the product CTP, via allosteric rather than competitive inhibition. Its function is as follows. Catalyzes the ATP-dependent amination of UTP to CTP with either L-glutamine or ammonia as the source of nitrogen. Regulates intracellular CTP levels through interactions with the four ribonucleotide triphosphates. This Carboxydothermus hydrogenoformans (strain ATCC BAA-161 / DSM 6008 / Z-2901) protein is CTP synthase.